Here is a 520-residue protein sequence, read N- to C-terminus: Macrophage receptor MARCO (520 aa).

Over 1–43 the chain is Cytoplasmic; sequence MRNKKILKEDELLSETQQAAFHQIAMEPFEINVPKPKRRNGVN. Residues 44–64 traverse the membrane as a helical; Signal-anchor for type II membrane protein segment; the sequence is FSLAVVVIYLILLTAGAGLLV. At 65–520 the chain is on the extracellular side; sequence VQVLNLQARL…EEDAGVECSV (456 aa). Asn-83 and Asn-136 each carry an N-linked (GlcNAc...) asparagine glycan. Residues 142-423 are disordered; the sequence is GMFRIKGEQG…KGERGENSVS (282 aa). One can recognise a Collagen-like domain in the interval 147 to 419; the sequence is KGEQGAPGLQ…VKGEKGERGE (273 aa). 3 stretches are compositionally biased toward low complexity: residues 203–227, 290–345, and 380–398; these read EAGL…PQGE, LAGF…PGAT, and SPGL…QKGD. Residues 410–419 show a composition bias toward basic and acidic residues; it reads VKGEKGERGE. The SRCR domain maps to 424-519; it reads VRIVGSSNRG…HEEDAGVECS (96 aa). 3 cysteine pairs are disulfide-bonded: Cys-447/Cys-508, Cys-460/Cys-518, and Cys-488/Cys-498.

As to quaternary structure, homotrimer; disulfide-linked. Trimers may assemble in larger oligomers thus resulting in the creation of a large surface capable of interacting with very large ligands. N-glycosylated. In terms of tissue distribution, expressed in alveolar macrophages (at protein level). Detected in macrophages from various tissues including thymus, kidney, Kupffer cells of liver, and spleen.

Its subcellular location is the cell membrane. Functionally, pattern recognition receptor (PRR) which binds Gram-positive and Gram-negative bacteria. Also plays a role in binding of unopsonized particles by alveolar macrophages. Binds to the secretoglobin SCGB3A2. The protein is Macrophage receptor MARCO (MARCO) of Homo sapiens (Human).